The sequence spans 549 residues: Limonene dehydrogenase subunit B (549 aa).

It belongs to the carotenoid/retinoid oxidoreductase family. In terms of assembly, heterodimer composed of CtmA and CtmB. FAD is required as a cofactor.

Its subcellular location is the cytoplasm. It catalyses the reaction (4S)-limonene + A + H2O = (4S)-perillyl alcohol + AH2. It carries out the reaction (4R)-limonene + A + H2O = (4R)-perillyl alcohol + AH2. Its pathway is terpene metabolism; monoterpene degradation. With respect to regulation, the presence of molecular oxygen causes a 40% reduction in specific activity. Involved in the degradation of the cyclic monoterpene limonene. Catalyzes the oxidation of limonene at the primary methyl group, forming perillyl alcohol. Hydroxylates the R- and S-enantiomers to their respective enantiomeric form of perillyl alcohol at a similar rate. Native CtmAB oxidizes a wide range of monocyclic monoterpenes containing the allylic methyl group motif (1-methyl-cyclohex-1-ene). Can also catalyze the reverse reaction, the reduction of perillyl alcohol to limonene, but with lower efficiency. Cannot use molecular oxygen as an electron acceptor. The natural electron acceptor is likely a heterodimeric electron transfer flavoprotein (ETF). This chain is Limonene dehydrogenase subunit B, found in Castellaniella defragrans (strain DSM 12143 / CCUG 39792 / 65Phen) (Alcaligenes defragrans).